The primary structure comprises 76 residues: Endothelin-1 (76 aa).

Residues 30 to 44 form an endothelin-like region; the sequence is CQCASQKDKKCWNFC.

It belongs to the endothelin/sarafotoxin family.

It localises to the secreted. In terms of biological role, endothelins are endothelium-derived vasoconstrictor peptides. Probable ligand for G-protein coupled receptors EDNRA and EDNRB which activates PTK2B, BCAR1, BCAR3 and, GTPases RAP1 and RHOA cascade in glomerular mesangial cells. Also binds the DEAR/FBXW7-AS1 receptor. Promotes mesenteric arterial wall remodeling via activation of ROCK signaling and subsequent colocalization of NFATC3 with F-actin filaments. NFATC3 then translocates to the nucleus where it subsequently promotes the transcription of the smooth muscle hypertrophy and differentiation marker ACTA2. In Macaca fascicularis (Crab-eating macaque), this protein is Endothelin-1 (EDN1).